The following is a 319-amino-acid chain: Acetyl-coenzyme A carboxylase carboxyl transferase subunit alpha (319 aa).

One can recognise a CoA carboxyltransferase C-terminal domain in the interval 38-292; the sequence is ALDKKAETLL…GKAIEMMLKE (255 aa).

The protein belongs to the AccA family. As to quaternary structure, acetyl-CoA carboxylase is a heterohexamer composed of biotin carboxyl carrier protein (AccB), biotin carboxylase (AccC) and two subunits each of ACCase subunit alpha (AccA) and ACCase subunit beta (AccD).

Its subcellular location is the cytoplasm. It catalyses the reaction N(6)-carboxybiotinyl-L-lysyl-[protein] + acetyl-CoA = N(6)-biotinyl-L-lysyl-[protein] + malonyl-CoA. Its pathway is lipid metabolism; malonyl-CoA biosynthesis; malonyl-CoA from acetyl-CoA: step 1/1. In terms of biological role, component of the acetyl coenzyme A carboxylase (ACC) complex. First, biotin carboxylase catalyzes the carboxylation of biotin on its carrier protein (BCCP) and then the CO(2) group is transferred by the carboxyltransferase to acetyl-CoA to form malonyl-CoA. In Cereibacter sphaeroides (strain ATCC 17029 / ATH 2.4.9) (Rhodobacter sphaeroides), this protein is Acetyl-coenzyme A carboxylase carboxyl transferase subunit alpha.